The following is a 217-amino-acid chain: tRNA (guanine-N(7)-)-methyltransferase (217 aa).

Residues Glu-44, Glu-69, Asp-96, and Asp-118 each contribute to the S-adenosyl-L-methionine site. The active site involves Asp-118. Substrate contacts are provided by residues Lys-122, Asp-154, and 191–194 (TEYE).

This sequence belongs to the class I-like SAM-binding methyltransferase superfamily. TrmB family.

It carries out the reaction guanosine(46) in tRNA + S-adenosyl-L-methionine = N(7)-methylguanosine(46) in tRNA + S-adenosyl-L-homocysteine. It functions in the pathway tRNA modification; N(7)-methylguanine-tRNA biosynthesis. Functionally, catalyzes the formation of N(7)-methylguanine at position 46 (m7G46) in tRNA. In Bacillus cereus (strain G9842), this protein is tRNA (guanine-N(7)-)-methyltransferase.